The sequence spans 510 residues: ATP-dependent zinc metalloprotease FtsH 2 (510 aa).

Residues 1 to 4 (MKKN) are Cytoplasmic-facing. A helical transmembrane segment spans residues 5 to 25 (LHIIILALSIFINLLFIYIFI). The Extracellular portion of the chain corresponds to 26–31 (SEVKPN). The helical transmembrane segment at 32–52 (LNLNLSFILTAAVIVVTYLLF) threads the bilayer. Residues 53 to 510 (KNKFSELMPV…LWEEENTLCV (458 aa)) are Cytoplasmic-facing. Residue 124–131 (GPPGTGKT) participates in ATP binding. His-343 contacts Zn(2+). Glu-344 is a catalytic residue. Zn(2+) is bound by residues His-347 and Asp-418.

In the central section; belongs to the AAA ATPase family. The protein in the C-terminal section; belongs to the peptidase M41 family. Homohexamer. The cofactor is Zn(2+).

The protein resides in the cell membrane. Acts as a processive, ATP-dependent zinc metallopeptidase for both cytoplasmic and membrane proteins. Plays a role in the quality control of integral membrane proteins. The chain is ATP-dependent zinc metalloprotease FtsH 2 from Thermoanaerobacter sp. (strain X514).